A 138-amino-acid chain; its full sequence is MLDKLDAALRFQQEALNLRAQRQEVLAANIANADTPGYQARDIDFASELKKVMQRGRDATSVVALTMTSTQHIPAQALTPPTAELQYRIPDQPSLDGNTVDMDRERTQFADNSLQYQMSLSALSGQIKGMMNVLQSGN.

Belongs to the flagella basal body rod proteins family. The basal body constitutes a major portion of the flagellar organelle and consists of a number of rings mounted on a central rod. In Gram-negative bacteria, at least four rings, L, P, S and M are present, whereas Gram-positive bacteria lack the L and P rings. The rod consists of about 26 subunits of FlgG in the distal portion, and FlgB, FlgC and FlgF build up the proximal portion of the rod with about 6 subunits each. Rod assembly occurs by export via the flagellum-specific pathway of its constituent proteins and by their incorporation into the rod structure in the probable order of FlgB, FlgC, FlgF and FlgG. Another protein, FliE, also assembles onto the stable rod structure.

The protein resides in the bacterial flagellum basal body. Structural component of flagellum, the bacterial motility apparatus. Part of the rod structure of flagellar basal body. The polypeptide is Flagellar basal body rod protein FlgB (flgB) (Escherichia coli (strain K12)).